The primary structure comprises 767 residues: Bifunctional lysine-specific demethylase and histidyl-hydroxylase NO66 (767 aa).

The tract at residues 21–324 is disordered; that stretch reads TVSQKQQREK…GRQEAHRQNS (304 aa). Ser44 carries the post-translational modification Phosphoserine. Residues 46–71 show a composition bias toward acidic residues; the sequence is SDDDDEDDGEGEDDNDSNSDEDESGS. A compositionally biased stretch (low complexity) spans 72–81; that stretch reads ESDATSADDS. Residues 82 to 98 show a composition bias toward acidic residues; sequence FSSDDNDDDDSGDEDGS. 2 stretches are compositionally biased toward polar residues: residues 127–137 and 177–199; these read YTINSENSSVE and ESAT…TSKP. Position 214 is a phosphoserine (Ser214). The segment covering 262–279 has biased composition (polar residues); the sequence is PSSSGASCPLPSKTSKQV. The segment covering 315-324 has biased composition (basic and acidic residues); the sequence is GRQEAHRQNS. The region spanning 420-565 is the JmjC domain; that stretch reads CSIRILNPST…NLLEKLMPMV (146 aa). 3 residues coordinate Fe cation: His466, Asp468, and His531.

It belongs to the ROX family. NO66 subfamily. The cofactor is Fe(2+).

It is found in the nucleus. It catalyses the reaction N(6),N(6)-dimethyl-L-lysyl(36)-[histone H3] + 2 2-oxoglutarate + 2 O2 = L-lysyl(36)-[histone H3] + 2 formaldehyde + 2 succinate + 2 CO2. In terms of biological role, oxygenase that can act as both a histone lysine demethylase and a ribosomal histidine hydroxylase. Specifically demethylates 'Lys-4' (H3K4me) and 'Lys-36' (H3K36me) of histone H3, thereby playing a central role in histone code. This Drosophila willistoni (Fruit fly) protein is Bifunctional lysine-specific demethylase and histidyl-hydroxylase NO66.